The primary structure comprises 159 residues: NADH-quinone oxidoreductase subunit I (159 aa).

4Fe-4S ferredoxin-type domains follow at residues 51–80 (RRYENGEERCIACKLCEAICPAQAIVIEAD) and 90–119 (TRYDIDMTKCIYCGLCQEACPVDAIVEGPN). [4Fe-4S] cluster contacts are provided by cysteine 60, cysteine 63, cysteine 66, cysteine 70, cysteine 99, cysteine 102, cysteine 105, and cysteine 109.

The protein belongs to the complex I 23 kDa subunit family. As to quaternary structure, NDH-1 is composed of 14 different subunits. Subunits NuoA, H, J, K, L, M, N constitute the membrane sector of the complex. [4Fe-4S] cluster serves as cofactor.

It is found in the cell inner membrane. It catalyses the reaction a quinone + NADH + 5 H(+)(in) = a quinol + NAD(+) + 4 H(+)(out). In terms of biological role, NDH-1 shuttles electrons from NADH, via FMN and iron-sulfur (Fe-S) centers, to quinones in the respiratory chain. The immediate electron acceptor for the enzyme in this species is believed to be ubiquinone. Couples the redox reaction to proton translocation (for every two electrons transferred, four hydrogen ions are translocated across the cytoplasmic membrane), and thus conserves the redox energy in a proton gradient. In Rickettsia peacockii (strain Rustic), this protein is NADH-quinone oxidoreductase subunit I.